The chain runs to 269 residues: Type II restriction enzyme SfiI (269 aa).

The enzyme catalyses Endonucleolytic cleavage of DNA to give specific double-stranded fragments with terminal 5'-phosphates.. An F and P subtype restriction enzyme that recognizes the double-stranded sequence 5'-GGCCN(5)GGCC-3' and cleaves before N-9. The polypeptide is Type II restriction enzyme SfiI (sfiIR) (Streptomyces fimbriatus).